A 119-amino-acid chain; its full sequence is NADH-quinone oxidoreductase subunit A (119 aa).

A run of 3 helical transmembrane segments spans residues 9 to 29 (VLLF…LGYV), 63 to 83 (LVAI…PWAV), and 88 to 108 (VGMT…VGFA).

The protein belongs to the complex I subunit 3 family. NDH-1 is composed of 14 different subunits. Subunits NuoA, H, J, K, L, M, N constitute the membrane sector of the complex.

It localises to the cell inner membrane. It carries out the reaction a quinone + NADH + 5 H(+)(in) = a quinol + NAD(+) + 4 H(+)(out). In terms of biological role, NDH-1 shuttles electrons from NADH, via FMN and iron-sulfur (Fe-S) centers, to quinones in the respiratory chain. The immediate electron acceptor for the enzyme in this species is believed to be ubiquinone. Couples the redox reaction to proton translocation (for every two electrons transferred, four hydrogen ions are translocated across the cytoplasmic membrane), and thus conserves the redox energy in a proton gradient. The sequence is that of NADH-quinone oxidoreductase subunit A from Paracidovorax citrulli (strain AAC00-1) (Acidovorax citrulli).